Consider the following 698-residue polypeptide: Voltage-dependent calcium channel beta subunit-associated regulatory protein (698 aa).

At 1 to 41 (MQPTATMATAAATTATVALTTSWDNATSRPTAEPDPILDNY) the chain is on the extracellular side. An N-linked (GlcNAc...) asparagine glycan is attached at Asn-25. A helical; Signal-anchor for type III membrane protein transmembrane segment spans residues 42 to 62 (VLLVVVMSLFVGGTLVVLSGV). Topologically, residues 63 to 698 (LLLCKRCWEV…APTSPDHSPA (636 aa)) are cytoplasmic. Disordered regions lie at residues 90-124 (YLDNGTHPIQDPDCRGEDPEGQDTETERFLATSST) and 185-275 (ASAA…SSGS). The segment covering 185 to 197 (ASAAATPHPATTS) has biased composition (low complexity). Residues Ser-290 and Ser-295 each carry the phosphoserine modification. Disordered stretches follow at residues 308–339 (SQRASSLDTRGSPKRHHFQRQRAASESMEQEG), 360–421 (PPPR…HAQC), 438–536 (ATAS…RRDY), and 554–648 (PHFD…GSGL). A compositionally biased stretch (pro residues) spans 360 to 375 (PPPRPFLASPTSPPPT). The segment covering 402–413 (PEHAQQQDPQQE) has biased composition (low complexity). Positions 459–468 (SGSGSGGGGA) are enriched in gly residues. The span at 471–482 (AFPPPPESPPAL) shows a compositional bias: pro residues. Residues 483-493 (RPKDGEARRLL) show a composition bias toward basic and acidic residues. Ser-501, Ser-520, and Ser-524 each carry phosphoserine. Basic residues predominate over residues 562–576 (HRTRAHPHTHARKQW). Ser-610 carries the post-translational modification Phosphoserine. Thr-691 is modified (phosphothreonine). Residues Ser-692 and Ser-696 each carry the phosphoserine modification.

Interacts with voltage-dependent calcium channels CACNB1, CACNB2, CACNB3 and CACNB4 beta subunits; prevents their interaction with the CACNA1C alpha subunit thereby negatively regulating the activity of the corresponding calcium channels. Expressed by neurons in the cortex, cerebellum and hippocampus and by pancreatic beta cells (at protein level).

It is found in the cytoplasmic vesicle. It localises to the secretory vesicle. The protein localises to the synaptic vesicle membrane. The protein resides in the cell membrane. Its subcellular location is the cell projection. It is found in the growth cone. In terms of biological role, negatively regulates voltage-gated calcium channels by preventing the interaction between their alpha and beta subunits. Thereby, negatively regulates calcium channels activity at the plasma membrane and indirectly inhibits calcium-regulated exocytosis. The sequence is that of Voltage-dependent calcium channel beta subunit-associated regulatory protein from Mus musculus (Mouse).